The following is a 204-amino-acid chain: High frequency lysogenization protein HflD homolog (204 aa).

It belongs to the HflD family.

The protein resides in the cytoplasm. It localises to the cell inner membrane. In Xylella fastidiosa (strain M23), this protein is High frequency lysogenization protein HflD homolog.